Here is a 356-residue protein sequence, read N- to C-terminus: Dynein regulatory complex protein 10 (356 aa).

The stretch at 126–167 (SNREFFEEVRDREERAVAEQEQLKQKLKLQRVELQKAAGTIQ) forms a coiled coil. The tract at residues 173 to 209 (ARGEVSEVQSSTQQSRAAIEGSARAQSEADKSSFQSD) is disordered. The span at 178-187 (SEVQSSTQQS) shows a compositional bias: low complexity. The stretch at 197–287 (AQSEADKSSF…LRQLQEYNSG (91 aa)) forms a coiled coil. Residues 319-348 (QNHAARVIQSYWRGFKKAREAAKKKAKKLE) enclose the IQ domain.

It belongs to the DRC10 family. As to quaternary structure, component of the nexin-dynein regulatory complex (N-DRC).

The protein localises to the cytoplasm. It localises to the cytoskeleton. It is found in the flagellum axoneme. Component of the nexin-dynein regulatory complex (N-DRC), a key regulator of ciliary/flagellar motility which maintains the alignment and integrity of the distal axoneme and regulates microtubule sliding in motile axonemes. This chain is Dynein regulatory complex protein 10, found in Chlamydomonas reinhardtii (Chlamydomonas smithii).